The primary structure comprises 284 residues: NAD kinase (284 aa).

Catalysis depends on Asp70, which acts as the Proton acceptor. NAD(+)-binding positions include 70–71 (DG), 139–140 (NE), Lys167, Asp169, Leu177, 180–185 (TAYNLS), and Gln236.

It belongs to the NAD kinase family. A divalent metal cation serves as cofactor.

Its subcellular location is the cytoplasm. It catalyses the reaction NAD(+) + ATP = ADP + NADP(+) + H(+). Functionally, involved in the regulation of the intracellular balance of NAD and NADP, and is a key enzyme in the biosynthesis of NADP. Catalyzes specifically the phosphorylation on 2'-hydroxyl of the adenosine moiety of NAD to yield NADP. The sequence is that of NAD kinase from Helicobacter pylori (strain G27).